A 334-amino-acid polypeptide reads, in one-letter code: Leucine carboxyl methyltransferase 1 (334 aa).

Residues K37, R73, G98, D122, 171–172 (DL), and E198 each bind S-adenosyl-L-methionine.

This sequence belongs to the methyltransferase superfamily. LCMT family.

It catalyses the reaction [phosphatase 2A protein]-C-terminal L-leucine + S-adenosyl-L-methionine = [phosphatase 2A protein]-C-terminal L-leucine methyl ester + S-adenosyl-L-homocysteine. Methylates the carboxyl group of the C-terminal leucine residue of protein phosphatase 2A catalytic subunits to form alpha-leucine ester residues. This is Leucine carboxyl methyltransferase 1 (LCMT1) from Homo sapiens (Human).